Consider the following 97-residue polypeptide: Apolipoprotein C-II (97 aa).

The first 22 residues, 1 to 22, serve as a signal peptide directing secretion; that stretch reads MGSRFFLALFLVILMLGNEVQG. The interval 63–71 is lipid binding; it reads SMDEKLRDM. A lipoprotein lipase cofactor region spans residues 75 to 97; sequence SSAAMSTYAGIFTDQLLTLLRGE.

It belongs to the apolipoprotein C2 family. As to expression, adult and fetal liver, intestine and peritoneal macrophages.

Its subcellular location is the secreted. Functionally, component of chylomicrons, very low-density lipoproteins (VLDL), low-density lipoproteins (LDL), and high-density lipoproteins (HDL) in plasma. Plays an important role in lipoprotein metabolism as an activator of lipoprotein lipase. This is Apolipoprotein C-II (Apoc2) from Mus musculus (Mouse).